Reading from the N-terminus, the 64-residue chain is Ribosome biogenesis protein Nop10 (64 aa).

This sequence belongs to the NOP10 family.

Involved in ribosome biogenesis; more specifically in 18S rRNA pseudouridylation and in cleavage of pre-rRNA. In Ignicoccus hospitalis (strain KIN4/I / DSM 18386 / JCM 14125), this protein is Ribosome biogenesis protein Nop10.